Here is a 175-residue protein sequence, read N- to C-terminus: Secretion monitor (175 aa).

The signal sequence occupies residues M1–A38.

The protein belongs to the SecM family.

It localises to the cytoplasm. The protein resides in the cytosol. It is found in the periplasm. Functionally, regulates secA expression by translational coupling of the secM secA operon. Translational pausing at a specific Pro residue 5 residues before the end of the protein may allow disruption of a mRNA repressor helix that normally suppresses secA translation initiation. This is Secretion monitor from Proteus mirabilis (strain HI4320).